Consider the following 208-residue polypeptide: Small ribosomal subunit protein uS5 (208 aa).

Positions 1 to 15 (MTDSNNQSPNKKTSG) are enriched in polar residues. Residues 1-54 (MTDSNNQSPNKKTSGSSSAPPAADGRQENRRSRGEKRGGRRDRRGQERDSEWQE) are disordered. 2 stretches are compositionally biased toward basic and acidic residues: residues 25 to 37 (GRQE…GEKR) and 44 to 54 (RGQERDSEWQE). The S5 DRBM domain occupies 52-115 (WQERVVQIRR…ADGKKHLVRV (64 aa)).

The protein belongs to the universal ribosomal protein uS5 family. As to quaternary structure, part of the 30S ribosomal subunit. Contacts proteins S4 and S8.

Functionally, with S4 and S12 plays an important role in translational accuracy. In terms of biological role, located at the back of the 30S subunit body where it stabilizes the conformation of the head with respect to the body. This Prochlorococcus marinus (strain NATL2A) protein is Small ribosomal subunit protein uS5.